The following is a 31-amino-acid chain: Cytochrome b6-f complex subunit 6 (31 aa).

The helical transmembrane segment at 4–24 (ITSYFGFLLVVLTITSALFIG) threads the bilayer.

The protein belongs to the PetL family. In terms of assembly, the 4 large subunits of the cytochrome b6-f complex are cytochrome b6, subunit IV (17 kDa polypeptide, PetD), cytochrome f and the Rieske protein, while the 4 small subunits are PetG, PetL, PetM and PetN. The complex functions as a dimer.

It is found in the plastid. The protein resides in the chloroplast thylakoid membrane. Its function is as follows. Component of the cytochrome b6-f complex, which mediates electron transfer between photosystem II (PSII) and photosystem I (PSI), cyclic electron flow around PSI, and state transitions. PetL is important for photoautotrophic growth as well as for electron transfer efficiency and stability of the cytochrome b6-f complex. The sequence is that of Cytochrome b6-f complex subunit 6 from Jasminum nudiflorum (Winter jasmine).